Consider the following 127-residue polypeptide: Group 3 truncated hemoglobin ctb (127 aa).

Positions 64 and 72 each coordinate heme.

It belongs to the truncated hemoglobin family. Group III subfamily. As to quaternary structure, monomer. Heme serves as cofactor.

It localises to the cytoplasm. Has been suggested to be involved in cytochrome c peroxidase or P450-like oxygen chemistry or cyanide detoxification. The high oxygen affinity of this protein suggests that it probably does not function as an oxygen transporter. The chain is Group 3 truncated hemoglobin ctb (ctb) from Campylobacter jejuni subsp. jejuni serotype O:2 (strain ATCC 700819 / NCTC 11168).